The sequence spans 148 residues: Large ribosomal subunit protein bL9 (148 aa).

This sequence belongs to the bacterial ribosomal protein bL9 family.

In terms of biological role, binds to the 23S rRNA. This chain is Large ribosomal subunit protein bL9, found in Caldicellulosiruptor saccharolyticus (strain ATCC 43494 / DSM 8903 / Tp8T 6331).